A 537-amino-acid chain; its full sequence is Glutamyl-tRNA reductase, chloroplastic (537 aa).

The N-terminal 48 residues, 1-48, are a transit peptide targeting the chloroplast; the sequence is MMASTTSATAAGGAFAAAKTRAGSSAAGGGACARVAAGGRRRSGVVVR. Substrate contacts are provided by residues 134-137, S194, 199-201, and Q205; these read TCNR and EGQ. Catalysis depends on C135, which acts as the Nucleophile. Position 276-281 (276-281) interacts with NADP(+); it reads GAGKMG.

The protein belongs to the glutamyl-tRNA reductase family.

The protein localises to the plastid. It is found in the chloroplast. The enzyme catalyses (S)-4-amino-5-oxopentanoate + tRNA(Glu) + NADP(+) = L-glutamyl-tRNA(Glu) + NADPH + H(+). It functions in the pathway porphyrin-containing compound metabolism; protoporphyrin-IX biosynthesis; 5-aminolevulinate from L-glutamyl-tRNA(Glu): step 1/2. Functionally, catalyzes the NADPH-dependent reduction of glutamyl-tRNA(Glu) to glutamate 1-semialdehyde (GSA). The chain is Glutamyl-tRNA reductase, chloroplastic from Oryza sativa subsp. japonica (Rice).